We begin with the raw amino-acid sequence, 293 residues long: MIETTDSLRDCLAPAKLNLFLHITGRRPDGYHTLQTVFQLLDWGDTLHFTRRDDGLITRRTEIADVPPEHDLTVRAATLLKTHTGSPEGVDIEIDKRLPMGAGLGGGSSNAATTLLALNRLWKLNLPRLELQALALKLGADVPFFVFGKNAFAQGVGEALDVVQLPPRHFLVVTPRVHVPTAAIFSEKALTRDSKPLTITDFPAELSCNTEWPESFGRNDMQQVVVGKYAEVAQVLRWFENVAPARMSGSGASVFAAFRSKAEAEAVQAKLPAEWNSAVAASLDQHPLFTFAS.

Residue Lys16 is part of the active site. 99-109 (PMGAGLGGGSS) is a binding site for ATP. Residue Asp141 is part of the active site.

This sequence belongs to the GHMP kinase family. IspE subfamily.

The catalysed reaction is 4-CDP-2-C-methyl-D-erythritol + ATP = 4-CDP-2-C-methyl-D-erythritol 2-phosphate + ADP + H(+). Its pathway is isoprenoid biosynthesis; isopentenyl diphosphate biosynthesis via DXP pathway; isopentenyl diphosphate from 1-deoxy-D-xylulose 5-phosphate: step 3/6. Catalyzes the phosphorylation of the position 2 hydroxy group of 4-diphosphocytidyl-2C-methyl-D-erythritol. This is 4-diphosphocytidyl-2-C-methyl-D-erythritol kinase from Paraburkholderia xenovorans (strain LB400).